The sequence spans 252 residues: 2-succinyl-6-hydroxy-2,4-cyclohexadiene-1-carboxylate synthase (252 aa).

This sequence belongs to the AB hydrolase superfamily. MenH family. Monomer.

It carries out the reaction 5-enolpyruvoyl-6-hydroxy-2-succinyl-cyclohex-3-ene-1-carboxylate = (1R,6R)-6-hydroxy-2-succinyl-cyclohexa-2,4-diene-1-carboxylate + pyruvate. It functions in the pathway quinol/quinone metabolism; 1,4-dihydroxy-2-naphthoate biosynthesis; 1,4-dihydroxy-2-naphthoate from chorismate: step 3/7. Its pathway is quinol/quinone metabolism; menaquinone biosynthesis. Catalyzes a proton abstraction reaction that results in 2,5-elimination of pyruvate from 2-succinyl-5-enolpyruvyl-6-hydroxy-3-cyclohexene-1-carboxylate (SEPHCHC) and the formation of 2-succinyl-6-hydroxy-2,4-cyclohexadiene-1-carboxylate (SHCHC). The polypeptide is 2-succinyl-6-hydroxy-2,4-cyclohexadiene-1-carboxylate synthase (Salmonella agona (strain SL483)).